A 149-amino-acid polypeptide reads, in one-letter code: Oligosaccharyltransferase complex subunit OSTC (149 aa).

At 1–32 the chain is on the cytoplasmic side; that stretch reads METLYRVPFLVLECPNLKLKKPPWVHMPSAMT. Residues 33-53 traverse the membrane as a helical segment; sequence VYALVVVSYFLITGGIIYDVI. Over 54–83 the chain is Extracellular; that stretch reads VEPPSVGSMTDEHGHQRPVAFLAYRVNGQY. The chain crosses the membrane as a helical span at residues 84–104; the sequence is IMEGLASSFLFTMGGLGFIIL. The Cytoplasmic segment spans residues 105 to 117; that stretch reads DRSNAPNIPKLNR. A helical transmembrane segment spans residues 118-138; the sequence is FLLLFIGFVCVLLSFFMARVF. Over 139–149 the chain is Extracellular; the sequence is MRMKLPGYLMG.

Belongs to the OSTC family. In terms of assembly, component of STT3A-containing oligosaccharyl transferase (OST-A) complex. STT3A-containing complex assembly occurs through the formation of 3 subcomplexes. Subcomplex 1 contains RPN1 and TMEM258, subcomplex 2 contains the STT3A-specific subunits STT3A, DC2/OSTC, and KCP2 as well as the core subunit OST4, and subcomplex 3 contains RPN2, DAD1, and OST48. The OST-A complex can form stable complexes with the Sec61 complex or with both the Sec61 and TRAP complexes. Interacts with PSEN1 and NCSTN; indicative for an association with the gamma-secretase complex.

The protein localises to the endoplasmic reticulum. It is found in the membrane. It participates in protein modification; protein glycosylation. Functionally, subunit of STT3A-containing oligosaccharyl transferase (OST-A) complex that catalyzes the initial transfer of a defined glycan (Glc(3)Man(9)GlcNAc(2) in eukaryotes) from the lipid carrier dolichol-pyrophosphate to an asparagine residue within an Asn-X-Ser/Thr consensus motif in nascent polypeptide chains, the first step in protein N-glycosylation. N-glycosylation occurs cotranslationally and the complex associates with the Sec61 complex at the channel-forming translocon complex that mediates protein translocation across the endoplasmic reticulum (ER). Within the OST-A complex, acts as an adapter that anchors the OST-A complex to the Sec61 complex. May be involved in N-glycosylation of APP (amyloid-beta precursor protein). Can modulate gamma-secretase cleavage of APP by enhancing endoprotelysis of PSEN1. The polypeptide is Oligosaccharyltransferase complex subunit OSTC (Canis lupus familiaris (Dog)).